The sequence spans 339 residues: DNA-directed RNA polymerase subunit alpha (339 aa).

Positions 1-233 (MVREEVAGST…DLFLPFLHAE (233 aa)) are alpha N-terminal domain (alpha-NTD). The segment at 264-339 (KKGIPLNCIF…IDLLKNKLSF (76 aa)) is alpha C-terminal domain (alpha-CTD).

It belongs to the RNA polymerase alpha chain family. As to quaternary structure, in plastids the minimal PEP RNA polymerase catalytic core is composed of four subunits: alpha, beta, beta', and beta''. When a (nuclear-encoded) sigma factor is associated with the core the holoenzyme is formed, which can initiate transcription.

The protein localises to the plastid. The protein resides in the chloroplast. It catalyses the reaction RNA(n) + a ribonucleoside 5'-triphosphate = RNA(n+1) + diphosphate. In terms of biological role, DNA-dependent RNA polymerase catalyzes the transcription of DNA into RNA using the four ribonucleoside triphosphates as substrates. In Psathyrostachys fragilis (Russian wild rye), this protein is DNA-directed RNA polymerase subunit alpha.